We begin with the raw amino-acid sequence, 808 residues long: uncharacterized protein (808 aa).

Position 35-42 (35-42 (GPNNVGKT)) interacts with ATP.

This is an uncharacterized protein from Methanocaldococcus jannaschii (strain ATCC 43067 / DSM 2661 / JAL-1 / JCM 10045 / NBRC 100440) (Methanococcus jannaschii).